The chain runs to 90 residues: Heat shock protein beta-7 (90 aa).

One can recognise a sHSP domain in the interval proline 39–proline 90.

Belongs to the small heat shock protein (HSP20) family. Interacts with C-terminal domain of actin-binding protein 280. Found in both cardiac and skeletal muscle.

The protein resides in the cytoplasm. It localises to the nucleus. Its subcellular location is the cajal body. This is Heat shock protein beta-7 (Hspb7) from Rattus norvegicus (Rat).